Consider the following 85-residue polypeptide: Protein C4 (85 aa).

Residue glycine 2 is the site of N-myristoyl glycine; by host attachment. Residues 42–65 (LNPAPTSTPTSTRTETLSNGENSR) are disordered. Residues 44–59 (PAPTSTPTSTRTETLS) are compositionally biased toward low complexity.

Belongs to the geminiviridae protein AC4/C4 family.

The protein localises to the host cell membrane. Functionally, pathogenicity determinant. May act as a suppressor of RNA-mediated gene silencing, also known as post-transcriptional gene silencing (PTGS), a mechanism of plant viral defense that limits the accumulation of viral RNAs. In Solanum lycopersicum (Tomato), this protein is Protein C4.